The sequence spans 173 residues: Protein-export protein SecB (173 aa).

The protein belongs to the SecB family. In terms of assembly, homotetramer, a dimer of dimers. One homotetramer interacts with 1 SecA dimer.

The protein localises to the cytoplasm. Its function is as follows. One of the proteins required for the normal export of preproteins out of the cell cytoplasm. It is a molecular chaperone that binds to a subset of precursor proteins, maintaining them in a translocation-competent state. It also specifically binds to its receptor SecA. This chain is Protein-export protein SecB, found in Novosphingobium aromaticivorans (strain ATCC 700278 / DSM 12444 / CCUG 56034 / CIP 105152 / NBRC 16084 / F199).